A 270-amino-acid polypeptide reads, in one-letter code: 4-hydroxy-tetrahydrodipicolinate reductase (270 aa).

Residues 8-13 (GAAGRM) and Glu-34 each bind NAD(+). An NADP(+)-binding site is contributed by Arg-35. NAD(+) is bound by residues 98-100 (GST) and 122-125 (SPNM). His-155 functions as the Proton donor/acceptor in the catalytic mechanism. His-156 provides a ligand contact to (S)-2,3,4,5-tetrahydrodipicolinate. Residue Lys-159 is the Proton donor of the active site. 165–166 (GT) is a (S)-2,3,4,5-tetrahydrodipicolinate binding site.

The protein belongs to the DapB family.

It is found in the cytoplasm. It carries out the reaction (S)-2,3,4,5-tetrahydrodipicolinate + NAD(+) + H2O = (2S,4S)-4-hydroxy-2,3,4,5-tetrahydrodipicolinate + NADH + H(+). The catalysed reaction is (S)-2,3,4,5-tetrahydrodipicolinate + NADP(+) + H2O = (2S,4S)-4-hydroxy-2,3,4,5-tetrahydrodipicolinate + NADPH + H(+). It functions in the pathway amino-acid biosynthesis; L-lysine biosynthesis via DAP pathway; (S)-tetrahydrodipicolinate from L-aspartate: step 4/4. Functionally, catalyzes the conversion of 4-hydroxy-tetrahydrodipicolinate (HTPA) to tetrahydrodipicolinate. The sequence is that of 4-hydroxy-tetrahydrodipicolinate reductase from Anaeromyxobacter dehalogenans (strain 2CP-1 / ATCC BAA-258).